We begin with the raw amino-acid sequence, 495 residues long: Membrane-bound lytic murein transglycosylase F (495 aa).

An N-terminal signal peptide occupies residues 1–30 (MSRIRHHRFIQSCLVISTLLITLTGCQVES). A non-LT domain region spans residues 31 to 270 (EPKTKLEQIR…LLEEKYFGHV (240 aa)). The tract at residues 272 to 495 (SFDYVDTRAF…SVSQAIETKK (224 aa)) is LT domain. E315 is a catalytic residue.

The protein in the N-terminal section; belongs to the bacterial solute-binding protein 3 family. In the C-terminal section; belongs to the transglycosylase Slt family.

The protein resides in the cell outer membrane. It catalyses the reaction Exolytic cleavage of the (1-&gt;4)-beta-glycosidic linkage between N-acetylmuramic acid (MurNAc) and N-acetylglucosamine (GlcNAc) residues in peptidoglycan, from either the reducing or the non-reducing ends of the peptidoglycan chains, with concomitant formation of a 1,6-anhydrobond in the MurNAc residue.. In terms of biological role, murein-degrading enzyme that degrades murein glycan strands and insoluble, high-molecular weight murein sacculi, with the concomitant formation of a 1,6-anhydromuramoyl product. Lytic transglycosylases (LTs) play an integral role in the metabolism of the peptidoglycan (PG) sacculus. Their lytic action creates space within the PG sacculus to allow for its expansion as well as for the insertion of various structures such as secretion systems and flagella. This is Membrane-bound lytic murein transglycosylase F from Aliivibrio fischeri (strain ATCC 700601 / ES114) (Vibrio fischeri).